The sequence spans 248 residues: Triosephosphate isomerase (248 aa).

Substrate-binding residues include asparagine 11 and lysine 13. The active-site Electrophile is the histidine 95. Glutamate 165 (proton acceptor) is an active-site residue.

This sequence belongs to the triosephosphate isomerase family. Homodimer.

The protein resides in the cytoplasm. It carries out the reaction dihydroxyacetone phosphate = methylglyoxal + phosphate. The catalysed reaction is D-glyceraldehyde 3-phosphate = dihydroxyacetone phosphate. It participates in carbohydrate degradation; glycolysis; D-glyceraldehyde 3-phosphate from glycerone phosphate: step 1/1. It functions in the pathway carbohydrate biosynthesis; gluconeogenesis. Its function is as follows. Triosephosphate isomerase is an extremely efficient metabolic enzyme that catalyzes the interconversion between dihydroxyacetone phosphate (DHAP) and D-glyceraldehyde-3-phosphate (G3P) in glycolysis and gluconeogenesis. In terms of biological role, it is also responsible for the non-negligible production of methylglyoxal a reactive cytotoxic side-product that modifies and can alter proteins, DNA and lipids. This chain is Triosephosphate isomerase (tpi1), found in Xenopus tropicalis (Western clawed frog).